Consider the following 972-residue polypeptide: Macrophage colony-stimulating factor 1 receptor (972 aa).

The first 19 residues, 1–19, serve as a signal peptide directing secretion; it reads MGPGVLLLLLVATAWHGQG. The Extracellular portion of the chain corresponds to 20–517; that stretch reads IPVIEPSVPE…HPPDEFLFTP (498 aa). Ig-like C2-type domains are found at residues 21–104, 107–197, 203–290, 299–399, and 402–502; these read PVIE…VKDP, PWNV…KVQK, PALT…HSTS, AYLN…LTLR, and PEVS…IPIS. Intrachain disulfides connect Cys-42-Cys-84, Cys-127-Cys-177, and Cys-224-Cys-278. N-linked (GlcNAc...) asparagine glycosylation is found at Asn-45, Asn-73, Asn-153, Asn-240, Asn-275, Asn-302, Asn-335, Asn-353, Asn-412, Asn-428, and Asn-480. Cys-419 and Cys-485 are oxidised to a cystine. A helical transmembrane segment spans residues 518–538; it reads VVVACMSIMALLLLLLLLLLY. The Cytoplasmic portion of the chain corresponds to 539-972; sequence KYKQKPKYQV…LLQPNNYQFC (434 aa). A regulatory juxtamembrane domain region spans residues 542 to 574; the sequence is QKPKYQVRWKIIESYEGNSYTFIDPTQLPYNEK. 2 positions are modified to phosphotyrosine; by autocatalysis: Tyr-546 and Tyr-561. A Protein kinase domain is found at 582–910; the sequence is LQFGKTLGAG…PTFQQICSFL (329 aa). Residues 588-596 and Lys-616 each bind ATP; that span reads LGAGAFGKV. 2 positions are modified to phosphotyrosine; by autocatalysis: Tyr-699 and Tyr-708. Ser-713 carries the post-translational modification Phosphoserine. At Tyr-723 the chain carries Phosphotyrosine; by autocatalysis. The active-site Proton acceptor is the Asp-778. The tract at residues 796-818 is activation loop; sequence DFGLARDIMNDSNYIVKGNARLP. Phosphotyrosine; by autocatalysis is present on residues Tyr-809 and Tyr-923. The tract at residues 918-950 is disordered; sequence RRERDYTNLPSSSRSGGSGSSSSELEEESSSEH. A compositionally biased stretch (low complexity) spans 928–940; it reads SSSRSGGSGSSSS. Residue Tyr-969 is modified to Phosphotyrosine; by autocatalysis.

This sequence belongs to the protein kinase superfamily. Tyr protein kinase family. CSF-1/PDGF receptor subfamily. In terms of assembly, interacts with INPPL1/SHIP2 and THOC5. Monomer. Homodimer. Interacts with CSF1 and IL34. Interaction with dimeric CSF1 or IL34 leads to receptor homodimerization. Interacts (tyrosine phosphorylated) with PLCG2 (via SH2 domain). Interacts (tyrosine phosphorylated) with PIK3R1 (via SH2 domain). Interacts (tyrosine phosphorylated) with FYN, YES1 and SRC (via SH2 domain). Interacts (tyrosine phosphorylated) with CBL, GRB2 and SLA2. Autophosphorylated in response to CSF1 or IL34 binding. Phosphorylation at Tyr-561 is important for normal down-regulation of signaling by ubiquitination, internalization and degradation. Phosphorylation at Tyr-561 and Tyr-809 is important for interaction with SRC family members, including FYN, YES1 and SRC, and for subsequent activation of these protein kinases. Phosphorylation at Tyr-699 and Tyr-923 is important for interaction with GRB2. Phosphorylation at Tyr-723 is important for interaction with PIK3R1. Phosphorylation at Tyr-708 is important for normal receptor degradation. Phosphorylation at Tyr-723 and Tyr-809 is important for interaction with PLCG2. Phosphorylation at Tyr-969 is important for interaction with CBL. Dephosphorylation by PTPN2 negatively regulates downstream signaling and macrophage differentiation. In terms of processing, ubiquitinated. Becomes rapidly polyubiquitinated after autophosphorylation, leading to its degradation. Expressed in bone marrow and in differentiated blood mononuclear cells.

The protein localises to the cell membrane. It catalyses the reaction L-tyrosyl-[protein] + ATP = O-phospho-L-tyrosyl-[protein] + ADP + H(+). Its activity is regulated as follows. Present in an inactive conformation in the absence of bound ligand. CSF1 or IL34 binding leads to dimerization and activation by autophosphorylation on tyrosine residues. Inhibited by imatinib/STI-571 (Gleevec), dasatinib, sunitinib/SU11248, lestaurtinib/CEP-701, midostaurin/PKC-412, Ki20227, linifanib/ABT-869, Axitinib/AG013736, sorafenib/BAY 43-9006 and GW2580. Its function is as follows. Tyrosine-protein kinase that acts as a cell-surface receptor for CSF1 and IL34 and plays an essential role in the regulation of survival, proliferation and differentiation of hematopoietic precursor cells, especially mononuclear phagocytes, such as macrophages and monocytes. Promotes the release of pro-inflammatory chemokines in response to IL34 and CSF1, and thereby plays an important role in innate immunity and in inflammatory processes. Plays an important role in the regulation of osteoclast proliferation and differentiation, the regulation of bone resorption, and is required for normal bone and tooth development. Required for normal male and female fertility, and for normal development of milk ducts and acinar structures in the mammary gland during pregnancy. Promotes reorganization of the actin cytoskeleton, regulates formation of membrane ruffles, cell adhesion and cell migration, and promotes cancer cell invasion. Activates several signaling pathways in response to ligand binding, including the ERK1/2 and the JNK pathway. Phosphorylates PIK3R1, PLCG2, GRB2, SLA2 and CBL. Activation of PLCG2 leads to the production of the cellular signaling molecules diacylglycerol and inositol 1,4,5-trisphosphate, that then lead to the activation of protein kinase C family members, especially PRKCD. Phosphorylation of PIK3R1, the regulatory subunit of phosphatidylinositol 3-kinase, leads to activation of the AKT1 signaling pathway. Activated CSF1R also mediates activation of the MAP kinases MAPK1/ERK2 and/or MAPK3/ERK1, and of the SRC family kinases SRC, FYN and YES1. Activated CSF1R transmits signals both via proteins that directly interact with phosphorylated tyrosine residues in its intracellular domain, or via adapter proteins, such as GRB2. Promotes activation of STAT family members STAT3, STAT5A and/or STAT5B. Promotes tyrosine phosphorylation of SHC1 and INPP5D/SHIP-1. Receptor signaling is down-regulated by protein phosphatases, such as INPP5D/SHIP-1, that dephosphorylate the receptor and its downstream effectors, and by rapid internalization of the activated receptor. In the central nervous system, may play a role in the development of microglia macrophages. The sequence is that of Macrophage colony-stimulating factor 1 receptor (CSF1R) from Homo sapiens (Human).